The following is a 601-amino-acid chain: uncharacterized protein (601 aa).

A signal peptide spans 1–24 (MKLSSLPSGLGLASLLGLISSATA).

Its subcellular location is the membrane. This is an uncharacterized protein from Schizosaccharomyces pombe (strain 972 / ATCC 24843) (Fission yeast).